The primary structure comprises 70 residues: Toxin Boma6d (70 aa).

In terms of domain architecture, LCN-type CS-alpha/beta spans 2-68; sequence RDAYIAQNYN…VPIKVEGKCH (67 aa). 4 cysteine pairs are disulfide-bonded: C12–C67, C16–C40, C22–C50, and C26–C52.

Belongs to the long (4 C-C) scorpion toxin superfamily. Sodium channel inhibitor family. Alpha subfamily. As to expression, expressed by the venom gland.

It is found in the secreted. In terms of biological role, alpha toxins bind voltage-independently at site-3 of sodium channels (Nav) and inhibit the inactivation of the activated channels, thereby blocking neuronal transmission. The sequence is that of Toxin Boma6d from Buthus occitanus mardochei (Moroccan scorpion).